A 177-amino-acid polypeptide reads, in one-letter code: Alkyl hydroperoxide reductase AhpD (177 aa).

Cys-133 acts as the Proton donor in catalysis. A disulfide bond links Cys-133 and Cys-136. Cys-136 functions as the Cysteine sulfenic acid (-SOH) intermediate in the catalytic mechanism.

The protein belongs to the AhpD family.

It carries out the reaction N(6)-[(R)-dihydrolipoyl]-L-lysyl-[lipoyl-carrier protein] + a hydroperoxide = N(6)-[(R)-lipoyl]-L-lysyl-[lipoyl-carrier protein] + an alcohol + H2O. Antioxidant protein with alkyl hydroperoxidase activity. Required for the reduction of the AhpC active site cysteine residues and for the regeneration of the AhpC enzyme activity. The polypeptide is Alkyl hydroperoxide reductase AhpD (Coxiella burnetii (strain CbuG_Q212) (Coxiella burnetii (strain Q212))).